Consider the following 141-residue polypeptide: Hemoglobin subunit alpha-D (141 aa).

The Globin domain occupies 1-141; it reads MLTEDDKQLI…VSAVLAEKYR (141 aa). Heme b-binding residues include His58 and His87.

This sequence belongs to the globin family. Heterotetramer of two alpha-D chains and two beta chains. Red blood cells.

In terms of biological role, involved in oxygen transport from the lung to the various peripheral tissues. This Chelonoidis niger (Galapagos giant tortoise) protein is Hemoglobin subunit alpha-D (HBAD).